A 185-amino-acid chain; its full sequence is Ribosome-recycling factor (185 aa).

Belongs to the RRF family.

It localises to the cytoplasm. Functionally, responsible for the release of ribosomes from messenger RNA at the termination of protein biosynthesis. May increase the efficiency of translation by recycling ribosomes from one round of translation to another. In Listeria monocytogenes serovar 1/2a (strain ATCC BAA-679 / EGD-e), this protein is Ribosome-recycling factor.